The chain runs to 347 residues: NADH-ubiquinone oxidoreductase chain 2 (347 aa).

A run of 10 helical transmembrane segments spans residues 3-23 (PLAL…TMMS), 25-45 (HWLT…PILM), 59-79 (YFMT…INLM), 93-115 (VASN…HFWV), 150-170 (NTNL…WGGL), 178-198 (ILAY…PFNP), 200-220 (LTLL…MILA), 240-260 (MTIM…LSGF), 274-294 (NSII…YFYM), and 326-346 (LPTL…ISML).

Belongs to the complex I subunit 2 family. In terms of assembly, core subunit of respiratory chain NADH dehydrogenase (Complex I) which is composed of 45 different subunits. Interacts with TMEM242.

The protein resides in the mitochondrion inner membrane. The enzyme catalyses a ubiquinone + NADH + 5 H(+)(in) = a ubiquinol + NAD(+) + 4 H(+)(out). Its function is as follows. Core subunit of the mitochondrial membrane respiratory chain NADH dehydrogenase (Complex I) which catalyzes electron transfer from NADH through the respiratory chain, using ubiquinone as an electron acceptor. Essential for the catalytic activity and assembly of complex I. This chain is NADH-ubiquinone oxidoreductase chain 2, found in Mammuthus primigenius (Siberian woolly mammoth).